Here is a 243-residue protein sequence, read N- to C-terminus: 23S rRNA (guanosine-2'-O-)-methyltransferase RlmB (243 aa).

Residues glycine 196, isoleucine 216, and leucine 225 each contribute to the S-adenosyl-L-methionine site.

This sequence belongs to the class IV-like SAM-binding methyltransferase superfamily. RNA methyltransferase TrmH family. RlmB subfamily. As to quaternary structure, homodimer.

It is found in the cytoplasm. The catalysed reaction is guanosine(2251) in 23S rRNA + S-adenosyl-L-methionine = 2'-O-methylguanosine(2251) in 23S rRNA + S-adenosyl-L-homocysteine + H(+). In terms of biological role, specifically methylates the ribose of guanosine 2251 in 23S rRNA. In Salmonella typhimurium (strain LT2 / SGSC1412 / ATCC 700720), this protein is 23S rRNA (guanosine-2'-O-)-methyltransferase RlmB.